The primary structure comprises 129 residues: Profilin-4 (129 aa).

Belongs to the profilin family.

The protein resides in the cytoplasm. Involved in male fertility. Required for manchette development and acrosome biogenesis during spermiogenesis. Binds in vitro to phospholipids, including phosphatidylinositol 3-phosphate (PtdIns(3)P), phosphatidylinositol 4,5-bisphosphate (PtdIns(4,5)P2), phosphatidylinositol 4-phosphate (PtdIns(4)P) and phosphatidic acid (PA). Contrary to other profilin family members, does not bind to actin in vitro. The polypeptide is Profilin-4 (PFN4) (Bos taurus (Bovine)).